Consider the following 249-residue polypeptide: Small ribosomal subunit protein eS6 (249 aa).

The span at 216-229 shows a compositional bias: basic and acidic residues; that stretch reads RMKEAKEKRQEQIA. Residues 216 to 249 are disordered; sequence RMKEAKEKRQEQIAKRRRLSSLRASTSKSESSQK. Phosphoserine occurs at positions 235, 236, 240, 244, and 247. Over residues 236-249 the composition is skewed to low complexity; that stretch reads SLRASTSKSESSQK.

This sequence belongs to the eukaryotic ribosomal protein eS6 family. As to quaternary structure, component of the small ribosomal subunit. Part of the small subunit (SSU) processome, composed of more than 70 proteins and the RNA chaperone small nucleolar RNA (snoRNA) U3. In terms of processing, ribosomal protein S6 is the major substrate of protein kinases in eukaryote ribosomes. The phosphorylation is stimulated by growth factors, tumor promoting agents, and mitogens. It is dephosphorylated at growth arrest.

The protein localises to the cytoplasm. It localises to the nucleus. The protein resides in the nucleolus. Its function is as follows. Component of the 40S small ribosomal subunit. Plays an important role in controlling cell growth and proliferation through the selective translation of particular classes of mRNA. Part of the small subunit (SSU) processome, first precursor of the small eukaryotic ribosomal subunit. During the assembly of the SSU processome in the nucleolus, many ribosome biogenesis factors, an RNA chaperone and ribosomal proteins associate with the nascent pre-rRNA and work in concert to generate RNA folding, modifications, rearrangements and cleavage as well as targeted degradation of pre-ribosomal RNA by the RNA exosome. This chain is Small ribosomal subunit protein eS6 (RPS6), found in Gallus gallus (Chicken).